A 450-amino-acid chain; its full sequence is Ammonium transporter Rh type A (450 aa).

Over M1–K4 the chain is Cytoplasmic. The helical transmembrane segment at F5 to E25 threads the bilayer. The Extracellular segment spans residues Y26–Y72. N-linked (GlcNAc...) asparagine glycans are attached at residues N31, N41, N52, and N58. The tract at residues Q34 to S61 is disordered. Residues P73–L93 form a helical membrane-spanning segment. At K94–G97 the chain is on the cytoplasmic side. Residues F98–V118 traverse the membrane as a helical segment. Topologically, residues Q119–K134 are extracellular. Residues N135–G155 form a helical membrane-spanning segment. At K156 to P159 the chain is on the cytoplasmic side. A helical transmembrane segment spans residues I160 to V180. Over T181 to T189 the chain is Extracellular. Residues G190–L210 traverse the membrane as a helical segment. Over Y211–D229 the chain is Cytoplasmic. Residues L230 to I250 traverse the membrane as a helical segment. Topologically, residues A251–A260 are extracellular. A helical transmembrane segment spans residues I261–L281. Over V282 to D289 the chain is Cytoplasmic. The helical transmembrane segment at M290–C307 threads the bilayer. Over A308–E311 the chain is Extracellular. A helical membrane pass occupies residues I312–Y332. Residues K333–C349 lie on the Cytoplasmic side of the membrane. Residues G350–I370 form a helical membrane-spanning segment. Topologically, residues S371–A384 are extracellular. A helical transmembrane segment spans residues T385 to L405. At K406–V450 the chain is on the cytoplasmic side.

It belongs to the ammonium transporter (TC 2.A.49) family. Rh subfamily. As to quaternary structure, homodimer. Heterotrimer; a RHCE monomer interacts with a RHAG homodimer. Component of the ankyrin-1 complex in the erythrocyte, composed of ANK1, RHCE, RHAG, SLC4A1, EPB42, GYPA, GYPB and AQP1. Interacts with GYPB (via the N-terminal); this interaction bridges the (RHAG)2(RHCE) heterotrimer with the SLC4A1 Band 3 I dimer complexed with GYPA. In terms of processing, glycosylated.

It is found in the membrane. It carries out the reaction methylamine(out) = methylamine(in). It catalyses the reaction NH4(+)(in) = NH4(+)(out). The catalysed reaction is CO2(out) = CO2(in). In terms of biological role, component of the ankyrin-1 complex, a multiprotein complex involved in the stability and shape of the erythrocyte membrane. Heterotrimer with RHCE (RHAG)2(RHCE), that transports ammonium and its related derivative methylammonium, in both neutral and ionic forms, across the erythrocyte membrane. The transport of NH4(+) is electrogenic and masks the NH3 transport. Also, may act as a CO2 channel. Moreover in erythrocyte, regulates RHD membrane expression and is associated with rhesus blood group antigen expression. This Rattus norvegicus (Rat) protein is Ammonium transporter Rh type A.